The primary structure comprises 1067 residues: Kinesin-like protein KIF11-A (1067 aa).

A Kinesin motor domain is found at 18–359; that stretch reads NIQVVVRCRP…LDYASRAKNI (342 aa). 105-112 provides a ligand contact to ATP; sequence GQTGTGKT. 3 coiled-coil regions span residues 365–480, 692–721, and 882–915; these read VNQK…QEAF, DSSS…HSEG, and QAQE…QVQS. T937 is subject to Phosphothreonine; by CDK1. Residue S1046 is modified to Phosphoserine; by NEK6.

This sequence belongs to the TRAFAC class myosin-kinesin ATPase superfamily. Kinesin family. BimC subfamily. In terms of assembly, heterotetramer of two heavy and two light chains. Interacts with aurka. Post-translationally, phosphorylation of Thr-937 during mitosis controls the association of this protein with the spindle apparatus. A subset of this protein primarily localized at the spindle pole is phosphorylated by NEK6 during mitosis. In terms of processing, phosphorylated on a serine residue by aurka. In terms of tissue distribution, highly expressed in unfertilized eggs, especially in the germinal vesicle and in the radial yolk-poor channels. Also present in testis.

The protein resides in the cytoplasm. The protein localises to the cytoskeleton. Its subcellular location is the spindle pole. Plus end-directed motor protein required for establishing a bipolar spindle. Associates with both interphase and spindle microtubules. May be involved in nuclear divisions taking place during the development of unfertilized eggs. Required in non-mitotic cells for transport of secretory proteins from the Golgi complex to the cell surface. The sequence is that of Kinesin-like protein KIF11-A (kif11-a) from Xenopus laevis (African clawed frog).